Here is a 332-residue protein sequence, read N- to C-terminus: 2,3-diketo-L-gulonate reductase (332 aa).

His-44 serves as the catalytic Proton donor. NAD(+)-binding positions include 168-174 (ITMVDMS), 224-225 (WK), and 304-306 (GHE).

This sequence belongs to the LDH2/MDH2 oxidoreductase family. DlgD subfamily. In terms of assembly, homodimer.

It localises to the cytoplasm. The catalysed reaction is 3-dehydro-L-gulonate + NAD(+) = 2,3-dioxo-L-gulonate + NADH + H(+). It catalyses the reaction 3-dehydro-L-gulonate + NADP(+) = 2,3-dioxo-L-gulonate + NADPH + H(+). Catalyzes the reduction of 2,3-diketo-L-gulonate in the presence of NADH, to form 3-keto-L-gulonate. The polypeptide is 2,3-diketo-L-gulonate reductase (Escherichia coli O127:H6 (strain E2348/69 / EPEC)).